The sequence spans 215 residues: ATP phosphoribosyltransferase (215 aa).

Belongs to the ATP phosphoribosyltransferase family. Short subfamily. Heteromultimer composed of HisG and HisZ subunits.

It localises to the cytoplasm. It catalyses the reaction 1-(5-phospho-beta-D-ribosyl)-ATP + diphosphate = 5-phospho-alpha-D-ribose 1-diphosphate + ATP. It functions in the pathway amino-acid biosynthesis; L-histidine biosynthesis; L-histidine from 5-phospho-alpha-D-ribose 1-diphosphate: step 1/9. Functionally, catalyzes the condensation of ATP and 5-phosphoribose 1-diphosphate to form N'-(5'-phosphoribosyl)-ATP (PR-ATP). Has a crucial role in the pathway because the rate of histidine biosynthesis seems to be controlled primarily by regulation of HisG enzymatic activity. This Cyanothece sp. (strain PCC 7425 / ATCC 29141) protein is ATP phosphoribosyltransferase.